The chain runs to 309 residues: tRNA dimethylallyltransferase (309 aa).

ATP is bound at residue 10–17 (GPTAVGKT). Residue 12-17 (TAVGKT) participates in substrate binding. Residues 35–38 (DSMQ) form an interaction with substrate tRNA region.

Belongs to the IPP transferase family. As to quaternary structure, monomer. Requires Mg(2+) as cofactor.

It carries out the reaction adenosine(37) in tRNA + dimethylallyl diphosphate = N(6)-dimethylallyladenosine(37) in tRNA + diphosphate. Its function is as follows. Catalyzes the transfer of a dimethylallyl group onto the adenine at position 37 in tRNAs that read codons beginning with uridine, leading to the formation of N6-(dimethylallyl)adenosine (i(6)A). The protein is tRNA dimethylallyltransferase of Clostridium botulinum (strain Eklund 17B / Type B).